Consider the following 254-residue polypeptide: Alcohol dehydrogenase (254 aa).

An NAD(+)-binding site is contributed by F10–L33. S138 contacts substrate. Y151 serves as the catalytic Proton acceptor.

This sequence belongs to the short-chain dehydrogenases/reductases (SDR) family. Homodimer.

It catalyses the reaction a primary alcohol + NAD(+) = an aldehyde + NADH + H(+). The enzyme catalyses a secondary alcohol + NAD(+) = a ketone + NADH + H(+). The polypeptide is Alcohol dehydrogenase (Adh) (Drosophila persimilis (Fruit fly)).